We begin with the raw amino-acid sequence, 50 residues long: uncharacterized protein (50 aa).

A helical membrane pass occupies residues I5–L19. Residues L19 to K50 are a coiled coil.

Its subcellular location is the membrane. This is an uncharacterized protein from Acheta domesticus (House cricket).